The sequence spans 324 residues: Putative arsenical pump-driving ATPase (324 aa).

21–28 is an ATP binding site; that stretch reads GKGGVGKT.

It belongs to the arsA ATPase family.

The enzyme catalyses arsenite(in) + ATP + H2O = arsenite(out) + ADP + phosphate + H(+). Anion-transporting ATPase. Catalyzes the extrusion of arsenite. This is Putative arsenical pump-driving ATPase from Methanothermobacter thermautotrophicus (strain ATCC 29096 / DSM 1053 / JCM 10044 / NBRC 100330 / Delta H) (Methanobacterium thermoautotrophicum).